A 192-amino-acid chain; its full sequence is Casparian strip membrane protein 2 (192 aa).

Residues M1–S31 are Cytoplasmic-facing. A helical transmembrane segment spans residues V32–M52. At G53–T79 the chain is on the extracellular side. N56 carries an N-linked (GlcNAc...) asparagine glycan. Residues F80–I100 traverse the membrane as a helical segment. At V101–R112 the chain is on the cytoplasmic side. The helical transmembrane segment at L113 to A133 threads the bilayer. The Extracellular segment spans residues A134–S166. A helical membrane pass occupies residues L167 to A187. The Cytoplasmic segment spans residues L188–H192.

The protein belongs to the Casparian strip membrane proteins (CASP) family. In terms of assembly, homodimer and heterodimers.

It localises to the cell membrane. Its function is as follows. Regulates membrane-cell wall junctions and localized cell wall deposition. Required for establishment of the Casparian strip membrane domain (CSD) and the subsequent formation of Casparian strips, a cell wall modification of the root endodermis that determines an apoplastic barrier between the intraorganismal apoplasm and the extraorganismal apoplasm and prevents lateral diffusion. The protein is Casparian strip membrane protein 2 of Panicum virgatum (Blackwell switchgrass).